The following is a 248-amino-acid chain: 3-deoxy-manno-octulosonate cytidylyltransferase (248 aa).

This sequence belongs to the KdsB family.

It localises to the cytoplasm. It catalyses the reaction 3-deoxy-alpha-D-manno-oct-2-ulosonate + CTP = CMP-3-deoxy-beta-D-manno-octulosonate + diphosphate. It functions in the pathway nucleotide-sugar biosynthesis; CMP-3-deoxy-D-manno-octulosonate biosynthesis; CMP-3-deoxy-D-manno-octulosonate from 3-deoxy-D-manno-octulosonate and CTP: step 1/1. It participates in bacterial outer membrane biogenesis; lipopolysaccharide biosynthesis. Its function is as follows. Activates KDO (a required 8-carbon sugar) for incorporation into bacterial lipopolysaccharide in Gram-negative bacteria. The sequence is that of 3-deoxy-manno-octulosonate cytidylyltransferase from Escherichia coli O6:H1 (strain CFT073 / ATCC 700928 / UPEC).